Here is a 492-residue protein sequence, read N- to C-terminus: Histone-lysine N-methyltransferase ASHH1 (492 aa).

The 52-residue stretch at Glu-36–Glu-87 folds into the AWS domain. Residues Gln-84–Asn-206 form the SET domain. Residues Ala-213–Gly-229 form the Post-SET domain. A disordered region spans residues Ser-259–Thr-340. Residues Ser-266 to Asn-275 are compositionally biased toward polar residues. The segment covering Asn-277–Leu-290 has biased composition (basic and acidic residues). The span at Glu-291 to Thr-306 shows a compositional bias: polar residues. The segment covering Val-317–Lys-326 has biased composition (basic and acidic residues). Polar residues predominate over residues Leu-328–Lys-339.

The protein belongs to the class V-like SAM-binding methyltransferase superfamily. Histone-lysine methyltransferase family. SET2 subfamily.

The protein localises to the nucleus. It is found in the chromosome. It localises to the centromere. It catalyses the reaction L-lysyl(4)-[histone H3] + 3 S-adenosyl-L-methionine = N(6),N(6),N(6)-trimethyl-L-lysyl(4)-[histone H3] + 3 S-adenosyl-L-homocysteine + 3 H(+). Its function is as follows. Histone methyltransferase involved in regulation of flowering time. Required for the expression of the SOC1/AGL20 gene. Required for histone H3 trimethylation on 'Lys-4' (H3K4me3) at the SOC1 locus. Prevents trimethylation on 'Lys-27' (H3K27me3) at the same locus. This Arabidopsis thaliana (Mouse-ear cress) protein is Histone-lysine N-methyltransferase ASHH1 (ASHH1).